Reading from the N-terminus, the 501-residue chain is Alveolysin (501 aa).

The first 32 residues, 1–32, serve as a signal peptide directing secretion; the sequence is MKKKSNHLKGRKVLVSLLVSLQVFAFASISSA. Beta stranded transmembrane passes span 191–204, 211–220, 289–298, and 306–318; these read QNQISSALNVNAKV, IDFNAVANGE, SNDVQTAFKL, and QASGQYKDIYENS. The short motif at 460-470 is the Conserved undecapeptide element; the sequence is ECTGLAWEWWR. The Cholesterol binding signature appears at 492 to 493; it reads TL.

It belongs to the cholesterol-dependent cytolysin family. In terms of assembly, homooligomeric pore complex of 35 to 50 subunits; when inserted in the host membrane.

The protein localises to the secreted. It is found in the host cell membrane. Inhibited by cholesterol and thiol reagents. A cholesterol-dependent toxin that causes cytolysis by forming pores in cholesterol containing host membranes. After binding to target membranes, the protein undergoes a major conformation change, leading to its insertion in the host membrane and formation of an oligomeric pore complex. Cholesterol is required for binding to host cell membranes, membrane insertion and pore formation; cholesterol binding is mediated by a Thr-Leu pair in the C-terminus. Can be reversibly inactivated by oxidation. The sequence is that of Alveolysin (alv) from Paenibacillus alvei (Bacillus alvei).